Reading from the N-terminus, the 216-residue chain is Uridine kinase (216 aa).

An ATP-binding site is contributed by 16–23 (GASASGKS).

The protein belongs to the uridine kinase family.

The protein resides in the cytoplasm. The enzyme catalyses uridine + ATP = UMP + ADP + H(+). The catalysed reaction is cytidine + ATP = CMP + ADP + H(+). It participates in pyrimidine metabolism; CTP biosynthesis via salvage pathway; CTP from cytidine: step 1/3. Its pathway is pyrimidine metabolism; UMP biosynthesis via salvage pathway; UMP from uridine: step 1/1. The sequence is that of Uridine kinase from Mannheimia succiniciproducens (strain KCTC 0769BP / MBEL55E).